A 359-amino-acid chain; its full sequence is Peptide chain release factor 1 (359 aa).

The residue at position 235 (Gln-235) is an N5-methylglutamine. A compositionally biased stretch (basic and acidic residues) spans 282–307 (RQRADSERSADRKSQVGSGDRSERIR). The interval 282–309 (RQRADSERSADRKSQVGSGDRSERIRTY) is disordered.

This sequence belongs to the prokaryotic/mitochondrial release factor family. Post-translationally, methylated by PrmC. Methylation increases the termination efficiency of RF1.

The protein localises to the cytoplasm. Its function is as follows. Peptide chain release factor 1 directs the termination of translation in response to the peptide chain termination codons UAG and UAA. The chain is Peptide chain release factor 1 from Allorhizobium ampelinum (strain ATCC BAA-846 / DSM 112012 / S4) (Agrobacterium vitis (strain S4)).